The primary structure comprises 355 residues: D-alanine--D-alanine ligase (355 aa).

The region spanning 143–350 is the ATP-grasp domain; sequence KIIFSNLKIP…IEQLVAKLVD (208 aa). ATP is bound at residue 178 to 233; it reads LKKLNFPVFVKPSNSGSSLGISKVINKSEIIPALEKARGIDPSILIEEGLEVREIE. The Mg(2+) site is built by Asp-303, Glu-317, and Asn-319.

It belongs to the D-alanine--D-alanine ligase family. The cofactor is Mg(2+). Requires Mn(2+) as cofactor.

The protein resides in the cytoplasm. The enzyme catalyses 2 D-alanine + ATP = D-alanyl-D-alanine + ADP + phosphate + H(+). It participates in cell wall biogenesis; peptidoglycan biosynthesis. Its function is as follows. Cell wall formation. This is D-alanine--D-alanine ligase from Prochlorococcus marinus (strain AS9601).